The primary structure comprises 611 residues: Chloroplast sensor kinase, chloroplastic (611 aa).

The N-terminal 79 residues, 1–79, are a transit peptide targeting the chloroplast; it reads MLLSAIASQT…PGGGETMVAS (79 aa). The segment at 17 to 50 is disordered; sequence NLHFSNSIPNPRPSNPSLKLLNASSSSSSSSSSS. Over residues 40 to 50 the composition is skewed to low complexity; it reads SSSSSSSSSSS. The interval 116 to 300 is GAF; sequence DFQRLCLEQL…VMDQKTMLLQ (185 aa). Cys-121 lines the [3Fe-4S] cluster pocket. Residue Ser-188 is modified to Phosphoserine. Residues 312–602 enclose the Histidine kinase domain; the sequence is KLVEQIRGPL…RVELWLPAFP (291 aa). A coiled-coil region spans residues 345 to 380; it reads VEDLIVQGDQIKDTLEELQDAVHLTKANIVRHNEEA. Residues 385-402 are compositionally biased toward basic and acidic residues; sequence NKTHNETRRSKYEHKDPI. Residues 385-420 form a disordered region; the sequence is NKTHNETRRSKYEHKDPIDGSQISSTRLSLGSGLDD.

Belongs to the chloroplast sensor kinase protein family. Self-interacts. Interacts with the plastoquinone analog 2,5-dibromo-3-methyl-5-isopropyl-p-benzoquinone (DBMIB) and with SIGA/SIG1. The cofactor is [3Fe-4S] cluster. Post-translationally, autophosphorylated, possibly on tyrosine residues, in photosystem I (PS I) light and in the presence of manganese ions Mn(2+), to a lesser degree, in the presence of calcium ions Ca(2+), but not in the presence of magnesium ions Mg(2+). Dithiothreitol (DTT) stimulates autophosphorylation. Phosphorylated on Ser-188 in vivo after exposure to far-red light (when plastoquinone (PQ) is oxidized). Not phosphorylated under orange light (reduces PQ).

It is found in the plastid. Its subcellular location is the chloroplast stroma. It catalyses the reaction L-tyrosyl-[protein] + ATP = O-phospho-L-tyrosyl-[protein] + ADP + H(+). In terms of biological role, sensor kinase that senses the plastoquinone (PQ) redox state involved in stoichiometry adjustment of both photosystems (e.g. long-term adaptation via transcriptional regulation of reaction center genes of photosystems I and II) and state transitions (e.g. short-term adaptation involving reversible post-translational phosphorylation of light-harvesting complex II, LHC II), thus linking photosynthesis with gene expression in chloroplasts. Autophosphorylates, probably on a tyrosine residue. Probably phosphorylates SIGA/SIG1 in response to plastoquinone redox state modification. Reduced PQ suppresses its autophosphorylation activity. Represses expression of a number of chloroplast-encoded genes. The sequence is that of Chloroplast sensor kinase, chloroplastic from Arabidopsis thaliana (Mouse-ear cress).